The following is a 198-amino-acid chain: Ras-related protein Rab-34, isoform NARR (198 aa).

A run of 13 repeats spans residues Pro7 to Arg15, Pro16 to Arg24, Pro25 to Arg33, Pro34 to Arg42, Ala43 to Pro51, Arg52 to Ser60, Pro61 to Thr69, Pro70 to Ser78, Pro79 to Ser87, Pro88 to Ser96, Pro97 to Ser105, Pro106 to Thr114, and Pro115 to Ser123. Residues Pro7–Arg125 form a 13 x 9 AA approximate tandem-repeats of P-R-V-I-V-G-(S/T)-P-R region. Ser13 is subject to Phosphoserine. The interval Ile37–Arg64 is disordered. At Thr69 the chain carries Phosphothreonine. Residues Ser78, Ser87, and Ser96 each carry the phosphoserine modification. Residues Val94–Val121 are compositionally biased toward low complexity. The interval Val94–Ile198 is disordered. Ser123 is modified (phosphoserine). Positions Arg145–Gly157 are enriched in basic and acidic residues. Low complexity predominate over residues Gly161 to Arg178.

As to quaternary structure, may interact with EIF5A and ERF1. Phosphorylated during M-phase.

Its subcellular location is the nucleus. It localises to the nucleolus. This chain is Ras-related protein Rab-34, isoform NARR (RAB34), found in Homo sapiens (Human).